The sequence spans 254 residues: Imidazole glycerol phosphate synthase subunit HisF (254 aa).

Residues aspartate 11 and aspartate 130 contribute to the active site.

This sequence belongs to the HisA/HisF family. As to quaternary structure, heterodimer of HisH and HisF.

The protein localises to the cytoplasm. The enzyme catalyses 5-[(5-phospho-1-deoxy-D-ribulos-1-ylimino)methylamino]-1-(5-phospho-beta-D-ribosyl)imidazole-4-carboxamide + L-glutamine = D-erythro-1-(imidazol-4-yl)glycerol 3-phosphate + 5-amino-1-(5-phospho-beta-D-ribosyl)imidazole-4-carboxamide + L-glutamate + H(+). The protein operates within amino-acid biosynthesis; L-histidine biosynthesis; L-histidine from 5-phospho-alpha-D-ribose 1-diphosphate: step 5/9. Functionally, IGPS catalyzes the conversion of PRFAR and glutamine to IGP, AICAR and glutamate. The HisF subunit catalyzes the cyclization activity that produces IGP and AICAR from PRFAR using the ammonia provided by the HisH subunit. The polypeptide is Imidazole glycerol phosphate synthase subunit HisF (Laribacter hongkongensis (strain HLHK9)).